A 467-amino-acid chain; its full sequence is DNA methyltransferase 1-associated protein 1 (467 aa).

Basic and acidic residues-rich tracts occupy residues 1–11 (MATGADVRDIL) and 26–48 (SKKDIINPDKKKSKKSSETLTFK). Residues 1-48 (MATGADVRDILELGGPEGDAASGTISKKDIINPDKKKSKKSSETLTFK) are disordered. A Glycyl lysine isopeptide (Lys-Gly) (interchain with G-Cter in SUMO2) cross-link involves residue Lys27. The SANT domain maps to 149 to 199 (DDAWTKAETDHLFDLSRRFDLRFVVIHDRYDHQQFKKRSVEDLKERYYHIC). Lys214 is covalently cross-linked (Glycyl lysine isopeptide (Lys-Gly) (interchain with G-Cter in SUMO2)). Residues 225 to 275 (RRKEQLERLYNRTPEQVAEEEYLLQELRKIEARKKEREKRSQDLQKLITAA) adopt a coiled-coil conformation. Residues 258–267 (KKEREKRSQD) are compositionally biased toward basic and acidic residues. Disordered regions lie at residues 258 to 305 (KKER…PAVP) and 404 to 467 (LGGP…AKKP). The span at 406 to 422 (GPATPASGPGPASAEPA) shows a compositional bias: low complexity. Position 445 is a phosphothreonine (Thr445). Ser448 bears the Phosphoserine mark.

As to quaternary structure, component of the NuA4 histone acetyltransferase complex which contains the catalytic subunit KAT5/TIP60 and the subunits EP400, TRRAP/PAF400, BRD8/SMAP, EPC1, DMAP1/DNMAP1, RUVBL1/TIP49, RUVBL2, ING3, actin, ACTL6A/BAF53A, MORF4L1/MRG15, MORF4L2/MRGX, MRGBP, YEATS4/GAS41, VPS72/YL1 and MEAF6. Component of a NuA4-related complex which contains EP400, TRRAP/PAF400, SRCAP, BRD8/SMAP, EPC1, DMAP1/DNMAP1, RUVBL1/TIP49, RUVBL2, actin, ACTL6A/BAF53A, VPS72 and YEATS4/GAS41. DMAP1 also forms a complex with DNMT1 and HDAC2. Throughout S phase it interacts directly with the N-terminus of DNMT1, which serves to recruit DMAP1 to replication foci. DMAP1 interacts with ING1, a component of the mSin3A transcription repressor complex, although this interaction is not required for recruitment of ING1 to heterochromatin. Interacts directly with the transcriptional corepressor TSG101. Interacts with the pro-apoptotic protein DAXX. Interacts with URI1.

The protein localises to the nucleus. It localises to the cytoplasm. Its function is as follows. Involved in transcription repression and activation. Its interaction with HDAC2 may provide a mechanism for histone deacetylation in heterochromatin following replication of DNA at late firing origins. Can also repress transcription independently of histone deacetylase activity. May specifically potentiate DAXX-mediated repression of glucocorticoid receptor-dependent transcription. Component of the NuA4 histone acetyltransferase (HAT) complex which is involved in transcriptional activation of select genes principally by acetylation of nucleosomal histones H4 and H2A. This modification may both alter nucleosome - DNA interactions and promote interaction of the modified histones with other proteins which positively regulate transcription. This complex may be required for the activation of transcriptional programs associated with oncogene and proto-oncogene mediated growth induction, tumor suppressor mediated growth arrest and replicative senescence, apoptosis, and DNA repair. NuA4 may also play a direct role in DNA repair when recruited to sites of DNA damage. Participates in the nuclear localization of URI1 and increases its transcriptional corepressor activity. The polypeptide is DNA methyltransferase 1-associated protein 1 (DMAP1) (Homo sapiens (Human)).